We begin with the raw amino-acid sequence, 274 residues long: Undecaprenyl-diphosphatase 2 (274 aa).

The next 6 helical transmembrane spans lie at 47–64 (VFVI…CWEY), 82–102 (WKFV…GLTF), 110–130 (LFSP…ILWA), 185–205 (ATEF…LYDL), 219–239 (LMAV…RGLI), and 249–269 (VFAW…WSGL).

Belongs to the UppP family.

Its subcellular location is the cell inner membrane. The catalysed reaction is di-trans,octa-cis-undecaprenyl diphosphate + H2O = di-trans,octa-cis-undecaprenyl phosphate + phosphate + H(+). Catalyzes the dephosphorylation of undecaprenyl diphosphate (UPP). Confers resistance to bacitracin. The sequence is that of Undecaprenyl-diphosphatase 2 from Rhodospirillum rubrum (strain ATCC 11170 / ATH 1.1.1 / DSM 467 / LMG 4362 / NCIMB 8255 / S1).